A 409-amino-acid chain; its full sequence is Astacin-like metalloendopeptidase (409 aa).

The first 19 residues, 1–19 (MDLKMLLIFIAFLLPSVLG), serve as a signal peptide directing secretion. Residues 30-39 (TATTESTQVT) show a composition bias toward low complexity. The tract at residues 30–54 (TATTESTQVTTEEDIYDSPSPAETD) is disordered. A Peptidase M12A domain is found at 87-285 (SAINCRNCYW…AKINRLYNCS (199 aa)). 5 disulfides stabilise this stretch: Cys91-Cys94, Cys134-Cys284, Cys155-Cys175, Cys287-Cys313, and Cys339-Cys362. His183 is a binding site for Zn(2+). Residue Glu184 is part of the active site. The Zn(2+) site is built by His187 and His193. In terms of domain architecture, CUB spans 287 to 399 (CSTIIDAAFG…SGFQATFTSA (113 aa)).

Zn(2+) is required as a cofactor. As to expression, expressed in ovary and gonads.

Its subcellular location is the cytoplasm. It localises to the cell membrane. It is found in the cytoplasmic vesicle. The protein resides in the secretory vesicle. The protein localises to the cortical granule. Its function is as follows. Probable oocyte-specific oolemmal receptor involved in sperm and egg adhesion and fertilization. May act as a protease. This is Astacin-like metalloendopeptidase (ASTL) from Gallus gallus (Chicken).